A 229-amino-acid polypeptide reads, in one-letter code: Uracil-DNA glycosylase (229 aa).

The Proton acceptor role is filled by D65.

Belongs to the uracil-DNA glycosylase (UDG) superfamily. UNG family.

It localises to the cytoplasm. It catalyses the reaction Hydrolyzes single-stranded DNA or mismatched double-stranded DNA and polynucleotides, releasing free uracil.. Its function is as follows. Excises uracil residues from the DNA which can arise as a result of misincorporation of dUMP residues by DNA polymerase or due to deamination of cytosine. This chain is Uracil-DNA glycosylase, found in Brevibacillus brevis (strain 47 / JCM 6285 / NBRC 100599).